Consider the following 498-residue polypeptide: NADH-quinone oxidoreductase subunit N (498 aa).

A run of 14 helical transmembrane segments spans residues 10–30, 44–64, 68–88, 109–129, 130–150, 164–184, 207–227, 239–259, 273–293, 301–321, 328–348, 377–397, 412–434, and 458–478; these read LMPL…MLLI, VVGL…GKFV, VMGM…ILVA, ELYL…ASSH, YASF…LLAY, YLVL…YIYA, VLLG…LAPF, PAPM…GLFV, LVTV…LLAV, ILGY…ISMT, VTVY…AVAL, ATLT…GFIG, FLAA…VMVV, and LMVL…DPMI.

The protein belongs to the complex I subunit 2 family. As to quaternary structure, NDH-1 is composed of 14 different subunits. Subunits NuoA, H, J, K, L, M, N constitute the membrane sector of the complex.

Its subcellular location is the cell inner membrane. It carries out the reaction a quinone + NADH + 5 H(+)(in) = a quinol + NAD(+) + 4 H(+)(out). Its function is as follows. NDH-1 shuttles electrons from NADH, via FMN and iron-sulfur (Fe-S) centers, to quinones in the respiratory chain. The immediate electron acceptor for the enzyme in this species is believed to be ubiquinone. Couples the redox reaction to proton translocation (for every two electrons transferred, four hydrogen ions are translocated across the cytoplasmic membrane), and thus conserves the redox energy in a proton gradient. This is NADH-quinone oxidoreductase subunit N from Acinetobacter baumannii (strain AB0057).